Consider the following 442-residue polypeptide: uncharacterized protein (442 aa).

The 238-residue stretch at 1–238 folds into the ABC transporter domain; the sequence is MKAEGLSGGY…QSIKAVYDTD (238 aa). 33–40 is an ATP binding site; that stretch reads GPNGSGKT.

This sequence belongs to the ABC transporter superfamily. In terms of assembly, the complex is composed of two ATP-binding proteins (YvrA), two transmembrane proteins (YvrB) and a solute-binding protein (YvrC).

Probably part of an ABC transporter complex. Probably responsible for energy coupling to the transport system. This is an uncharacterized protein from Bacillus subtilis (strain 168).